The following is a 1366-amino-acid chain: DNA-directed RNA polymerase subunit beta (1366 aa).

It belongs to the RNA polymerase beta chain family. In terms of assembly, the RNAP catalytic core consists of 2 alpha, 1 beta, 1 beta' and 1 omega subunit. When a sigma factor is associated with the core the holoenzyme is formed, which can initiate transcription.

It carries out the reaction RNA(n) + a ribonucleoside 5'-triphosphate = RNA(n+1) + diphosphate. DNA-dependent RNA polymerase catalyzes the transcription of DNA into RNA using the four ribonucleoside triphosphates as substrates. The protein is DNA-directed RNA polymerase subunit beta of Polynucleobacter asymbioticus (strain DSM 18221 / CIP 109841 / QLW-P1DMWA-1) (Polynucleobacter necessarius subsp. asymbioticus).